The following is a 177-amino-acid chain: Adenine phosphoribosyltransferase (177 aa).

The protein belongs to the purine/pyrimidine phosphoribosyltransferase family. Homodimer.

Its subcellular location is the cytoplasm. The enzyme catalyses AMP + diphosphate = 5-phospho-alpha-D-ribose 1-diphosphate + adenine. Its pathway is purine metabolism; AMP biosynthesis via salvage pathway; AMP from adenine: step 1/1. Its function is as follows. Catalyzes a salvage reaction resulting in the formation of AMP, that is energically less costly than de novo synthesis. The polypeptide is Adenine phosphoribosyltransferase (Leptospira biflexa serovar Patoc (strain Patoc 1 / Ames)).